Here is a 457-residue protein sequence, read N- to C-terminus: Asparagine--tRNA ligase (457 aa).

Belongs to the class-II aminoacyl-tRNA synthetase family. In terms of assembly, homodimer.

The protein resides in the cytoplasm. The catalysed reaction is tRNA(Asn) + L-asparagine + ATP = L-asparaginyl-tRNA(Asn) + AMP + diphosphate + H(+). This chain is Asparagine--tRNA ligase, found in Phytoplasma australiense.